A 216-amino-acid polypeptide reads, in one-letter code: Probable GTP-binding protein EngB (216 aa).

The 174-residue stretch at 43-216 folds into the EngB-type G domain; sequence DRLEVCFAGR…TLRSIITDLT (174 aa). GTP-binding positions include 51-58, 78-82, 96-99, 163-166, and 197-199; these read GRSNVGKS, GRTQE, DLPG, TKAD, and TSS. Mg(2+) contacts are provided by Ser58 and Thr80.

It belongs to the TRAFAC class TrmE-Era-EngA-EngB-Septin-like GTPase superfamily. EngB GTPase family. Mg(2+) serves as cofactor.

In terms of biological role, necessary for normal cell division and for the maintenance of normal septation. The protein is Probable GTP-binding protein EngB of Roseobacter denitrificans (strain ATCC 33942 / OCh 114) (Erythrobacter sp. (strain OCh 114)).